Reading from the N-terminus, the 102-residue chain is ATP-dependent Clp protease adapter protein ClpS (102 aa).

The protein belongs to the ClpS family. As to quaternary structure, binds to the N-terminal domain of the chaperone ClpA.

Involved in the modulation of the specificity of the ClpAP-mediated ATP-dependent protein degradation. In Shewanella sediminis (strain HAW-EB3), this protein is ATP-dependent Clp protease adapter protein ClpS.